A 146-amino-acid chain; its full sequence is Snaclec stejaggregin-B subunit beta-1 (146 aa).

Positions 1 to 23 are cleaved as a signal peptide; sequence MGRFIFVSFGLLVVFLSLSGTGA. 3 disulfides stabilise this stretch: cysteine 25/cysteine 36, cysteine 53/cysteine 142, and cysteine 119/cysteine 134. Residues 32 to 143 enclose the C-type lectin domain; that stretch reads YDLYCYRVFQ…CSQTYPFVCK (112 aa).

This sequence belongs to the snaclec family. In terms of assembly, heteromultimer; disulfide-linked. In terms of tissue distribution, expressed by the venom gland.

The protein localises to the secreted. Its function is as follows. Interferes with one step of hemostasis (modulation of platelet aggregation, or coagulation cascade, for example). The protein is Snaclec stejaggregin-B subunit beta-1 of Trimeresurus stejnegeri (Chinese green tree viper).